Consider the following 145-residue polypeptide: D-aminoacyl-tRNA deacylase (145 aa).

The Gly-cisPro motif, important for rejection of L-amino acids signature appears at 137–138 (GP).

The protein belongs to the DTD family. Homodimer.

It localises to the cytoplasm. The catalysed reaction is glycyl-tRNA(Ala) + H2O = tRNA(Ala) + glycine + H(+). The enzyme catalyses a D-aminoacyl-tRNA + H2O = a tRNA + a D-alpha-amino acid + H(+). An aminoacyl-tRNA editing enzyme that deacylates mischarged D-aminoacyl-tRNAs. Also deacylates mischarged glycyl-tRNA(Ala), protecting cells against glycine mischarging by AlaRS. Acts via tRNA-based rather than protein-based catalysis; rejects L-amino acids rather than detecting D-amino acids in the active site. By recycling D-aminoacyl-tRNA to D-amino acids and free tRNA molecules, this enzyme counteracts the toxicity associated with the formation of D-aminoacyl-tRNA entities in vivo and helps enforce protein L-homochirality. This Pectobacterium carotovorum subsp. carotovorum (strain PC1) protein is D-aminoacyl-tRNA deacylase.